Consider the following 172-residue polypeptide: 5'(3')-deoxyribonucleotidase (172 aa).

The active-site Nucleophile is the Asp8. 3 residues coordinate Mg(2+): Asp8, Asp10, and Asp132. Asp10 functions as the Proton donor in the catalytic mechanism.

The protein belongs to the 5'(3')-deoxyribonucleotidase family. Requires Mg(2+) as cofactor.

Functionally, dephosphorylates nucleoside monophosphates such as the 5' and 2'(3')-phosphates of deoxyribonucleotides in vitro. Also catalyzes the dephosphorylation of coenzyme A (CoA), pyridoxal-5'-phosphate (PLP), riboflavine-5-phosphate (FMN) and nicotinamide adenine dinucleotide phosphate (NADP) in vitro. The chain is 5'(3')-deoxyribonucleotidase (yorS) from Bacillus subtilis (strain 168).